The sequence spans 183 residues: Inner membrane-spanning protein YciB (183 aa).

5 consecutive transmembrane segments (helical) span residues Val22–Phe44, Ile53–Phe73, Trp76–Phe96, Leu121–Phe141, and Gly153–Ile173.

This sequence belongs to the YciB family.

Its subcellular location is the cell inner membrane. Its function is as follows. Plays a role in cell envelope biogenesis, maintenance of cell envelope integrity and membrane homeostasis. This chain is Inner membrane-spanning protein YciB, found in Haemophilus ducreyi (strain 35000HP / ATCC 700724).